The following is a 467-amino-acid chain: Argininosuccinate lyase (467 aa).

The protein belongs to the lyase 1 family. Argininosuccinate lyase subfamily.

The protein resides in the cytoplasm. The enzyme catalyses 2-(N(omega)-L-arginino)succinate = fumarate + L-arginine. It participates in amino-acid biosynthesis; L-arginine biosynthesis; L-arginine from L-ornithine and carbamoyl phosphate: step 3/3. The protein is Argininosuccinate lyase of Thioalkalivibrio sulfidiphilus (strain HL-EbGR7).